Here is a 149-residue protein sequence, read N- to C-terminus: Mediator of RNA polymerase II transcription subunit 9 (149 aa).

The tract at residues 18–64 is disordered; the sequence is TNPTLDKPNAEATKEEFSSAENRDEKDYLTNQQPKNLSTPSTSSNGE. The segment covering 25–45 has biased composition (basic and acidic residues); it reads PNAEATKEEFSSAENRDEKDY. Positions 46-63 are enriched in polar residues; it reads LTNQQPKNLSTPSTSSNG. 2 short sequence motifs (nuclear localization signal) span residues 77–99 and 136–149; these read RKDPNNLSNQLETLTGSIRHRLK and KRDVLDDLYRKLQR.

The protein belongs to the Mediator complex subunit 9 family. As to quaternary structure, component of the Mediator complex, which is composed of at least 21 subunits that form three structurally distinct submodules. The Mediator head module contains MED6, MED8, MED11, SRB4/MED17, SRB5/MED18, ROX3/MED19, SRB2/MED20 and SRB6/MED22, the middle module contains MED1, MED4, NUT1/MED5, MED7, CSE2/MED9, NUT2/MED10, SRB7/MED21 and SOH1/MED31, and the tail module contains MED2, PGD1/MED3, RGR1/MED14, GAL11/MED15 and SIN4/MED16. The head and the middle modules interact directly with RNA polymerase II, whereas the elongated tail module interacts with gene-specific regulatory proteins. CSE2/MED9 interacts directly with MED4.

The protein resides in the nucleus. In terms of biological role, component of the Mediator complex, a coactivator involved in the regulated transcription of nearly all RNA polymerase II-dependent genes. Mediator functions as a bridge to convey information from gene-specific regulatory proteins to the basal RNA polymerase II transcription machinery. The Mediator complex, having a compact conformation in its free form, is recruited to promoters by direct interactions with regulatory proteins and serves for the assembly of a functional preinitiation complex with RNA polymerase II and the general transcription factors. The Mediator complex unfolds to an extended conformation and partially surrounds RNA polymerase II, specifically interacting with the unphosphorylated form of the C-terminal domain (CTD) of RNA polymerase II. The Mediator complex dissociates from the RNA polymerase II holoenzyme and stays at the promoter when transcriptional elongation begins. The polypeptide is Mediator of RNA polymerase II transcription subunit 9 (CSE2) (Saccharomyces cerevisiae (strain ATCC 204508 / S288c) (Baker's yeast)).